The sequence spans 109 residues: ATP-dependent Clp protease adapter protein ClpS (109 aa).

Residues 1-21 form a disordered region; that stretch reads MAERKQGGQNNGAGSSVITEV.

The protein belongs to the ClpS family. In terms of assembly, binds to the N-terminal domain of the chaperone ClpA.

In terms of biological role, involved in the modulation of the specificity of the ClpAP-mediated ATP-dependent protein degradation. This is ATP-dependent Clp protease adapter protein ClpS from Caulobacter sp. (strain K31).